The sequence spans 617 residues: tRNA uridine 5-carboxymethylaminomethyl modification enzyme MnmG (617 aa).

Residues 9-14 (GAGHAG), V120, and T175 each bind FAD. Residue 267–281 (GPRYCPSIEDKVVRF) participates in NAD(+) binding. Q364 serves as a coordination point for FAD.

This sequence belongs to the MnmG family. In terms of assembly, homodimer. Heterotetramer of two MnmE and two MnmG subunits. The cofactor is FAD.

It localises to the cytoplasm. Its function is as follows. NAD-binding protein involved in the addition of a carboxymethylaminomethyl (cmnm) group at the wobble position (U34) of certain tRNAs, forming tRNA-cmnm(5)s(2)U34. In Onion yellows phytoplasma (strain OY-M), this protein is tRNA uridine 5-carboxymethylaminomethyl modification enzyme MnmG.